An 84-amino-acid chain; its full sequence is UPF0386 protein NGR_c10980 (84 aa).

The protein belongs to the UPF0386 family.

This Sinorhizobium fredii (strain NBRC 101917 / NGR234) protein is UPF0386 protein NGR_c10980.